A 309-amino-acid polypeptide reads, in one-letter code: Olfactory receptor 5B21 (309 aa).

Residues 1–26 lie on the Extracellular side of the membrane; the sequence is MENSTEVTEFILLGLTDDPNLQIPLL. A glycan (N-linked (GlcNAc...) asparagine) is linked at asparagine 3. A helical membrane pass occupies residues 27–47; the sequence is LAFLFIYLITLLGNGGMMVII. Topologically, residues 48–55 are cytoplasmic; the sequence is HSDSHLHT. Residues 56-76 form a helical membrane-spanning segment; that stretch reads PMYFFLSNLSLVDLGYSSAVA. Residues 77–95 are Extracellular-facing; the sequence is PKTVAALRSGDKAISYDGC. An intrachain disulfide couples cysteine 95 to cysteine 177. A helical transmembrane segment spans residues 96–116; it reads AAQFFFFVGFATVECYLLASM. Residues 117-137 are Cytoplasmic-facing; that stretch reads AYDRHAAVCRPLHYTTTMTAG. Residues 138 to 158 traverse the membrane as a helical segment; the sequence is VCALLATGSYVSGFLNASIHA. At 159-199 the chain is on the extracellular side; sequence AGTFRLSFCGSNEINHFFCDIPPLLALSCSDTRISKLVVFV. Residues 200–220 traverse the membrane as a helical segment; it reads AGFNVFFTLLVILISYFFICI. Topologically, residues 221 to 235 are cytoplasmic; the sequence is TIQRMHSAEGQKKVF. Residues 236–256 traverse the membrane as a helical segment; that stretch reads STCASHLTALSIFYGTIIFMY. The Extracellular portion of the chain corresponds to 257–270; that stretch reads LQPNSSQSVDTDKI. An N-linked (GlcNAc...) asparagine glycan is attached at asparagine 260. Residues 271 to 291 traverse the membrane as a helical segment; the sequence is ASVFYTVVIPMLNPLIYSLRN. Residues 292–309 lie on the Cytoplasmic side of the membrane; the sequence is KEVKSALWKILNKLYPQY.

The protein belongs to the G-protein coupled receptor 1 family.

It localises to the cell membrane. Functionally, odorant receptor. This Homo sapiens (Human) protein is Olfactory receptor 5B21.